The primary structure comprises 486 residues: Nuclear distribution protein PAC1 (486 aa).

Positions 66 to 99 (STVLRLQKKIIDLENEISNLNNIINSTNSDNNGI) form a coiled coil. WD repeat units follow at residues 119-158 (QCENIVTTVKLHPNLPLVLNGCNDGNLYIWNISNDDNTIP), 164-205 (AHTR…RTLN), 206-246 (GHEH…SLKS), 249-291 (GHSE…GVAM), 294-328 (GHSHVVETVKFLPSLQANKILDEYITKNTEQFPTI), 329-368 (PLELLKDKTYNQLGFKYCITASRDNTIKLWLIPPPTIAPH), 389-428 (GHSSWVKSLCVHPNGKFIISGSDDKTIKFWDLSGLLETGY), and 437-483 (GHDG…NSIK).

It belongs to the WD repeat LIS1/nudF family. As to quaternary structure, self-associates. Interacts with NDL1 and dynein.

Its subcellular location is the cytoplasm. It localises to the cytoskeleton. It is found in the spindle pole. Functionally, positively regulates the activity of the minus-end directed microtubule motor protein dynein. Plays a central role in positioning the mitotic spindle at the bud neck during cell division. Targets cytoplasmic dynein to microtubule plus ends, thereby promoting dynein-mediated microtubule sliding along the bud cortex and consequently the movement of the mitotic spindle to the bud neck. The sequence is that of Nuclear distribution protein PAC1 from Candida albicans (strain SC5314 / ATCC MYA-2876) (Yeast).